A 366-amino-acid polypeptide reads, in one-letter code: Mannonate dehydratase (366 aa).

It belongs to the mannonate dehydratase family. It depends on Fe(2+) as a cofactor. The cofactor is Mn(2+).

The catalysed reaction is D-mannonate = 2-dehydro-3-deoxy-D-gluconate + H2O. The protein operates within carbohydrate metabolism; pentose and glucuronate interconversion. Catalyzes the dehydration of D-mannonate. The chain is Mannonate dehydratase from Streptococcus pneumoniae (strain 70585).